Here is a 1063-residue protein sequence, read N- to C-terminus: Structural polyprotein (1063 aa).

Positions 23–131 (LRAELAAGAS…LGPPTNPFQA (109 aa)) are disordered. Residues 30-69 (GASQLRRPRPPRQRDSSTSGDDSGRDSGGPRRRRGNRGRG) are human C1QBP/SF2P32-binding. Residue Ser46 is modified to Phosphoserine; by host. Residues 59 to 69 (PRRRRGNRGRG) are compositionally biased toward basic residues. The segment covering 70 to 87 (QRKDWSKAPPPPEERQES) has biased composition (basic and acidic residues). The segment covering 93-107 (VPKPPRAPPQPPQPP) has biased composition (pro residues). A disulfide bond links Cys153 and Cys197. The functions as E2 signal peptide stretch occupies residues 279 to 300 (GAPQVFLAGLLLAAVAVGTARA). Residues 301-534 (GLQPRTDIAA…LWLATANALS (234 aa)) lie on the Extracellular side of the membrane. Residues 305 to 327 (RTDIAAPPAPPQAPRAHGKHYGH) form a disordered region. 4 N-linked (GlcNAc...) asparagine; by host glycosylation sites follow: Asn353, Asn371, Asn410, and Asn429. A helical membrane pass occupies residues 535–555 (LDHALAAVVLLVPWVLIFMLC). At 556-582 (RRACRRRGAAAALTAVVLQGYNPPAYG) the chain is on the cytoplasmic side. Positions 562 to 582 (RGAAAALTAVVLQGYNPPAYG) are functions as E1 signal peptide. The Extracellular segment spans residues 583-1028 (EEAFTYLCTA…QTWAEWAAAH (446 aa)). 8 disulfide bridges follow: Cys590/Cys595, Cys619/Cys824, Cys641/Cys653, Cys699/Cys712, Cys758/Cys767, Cys807/Cys817, Cys931/Cys934, and Cys950/Cys983. Asn658 is a glycosylation site (N-linked (GlcNAc...) asparagine; by host). Ca(2+) is bound by residues Asn670 and Ala671. Ca(2+) is bound by residues Asp718 and Thr719. N-linked (GlcNAc...) asparagine; by host glycosylation is found at Asn759 and Asn791. O-linked (GalNAc...) threonine; by host glycosylation is found at Thr1011 and Thr1012. The chain crosses the membrane as a helical span at residues 1029–1049 (WWQLTLGAICALLLAGLLACC). The Extracellular portion of the chain corresponds to 1050–1063 (AKCLYHLRGAIAPR).

In terms of assembly, homodimer; further assembles into homooligomer. Interacts with human C1QBP. Interacts (via N-terminus) with protease/methyltransferase p150. Heterodimer with spike glycoprotein E2. As to quaternary structure, heterodimer with spike glycoprotein E1. In terms of processing, structural polyprotein: Specific enzymatic cleavages in vivo yield mature proteins. Two signal peptidase-mediated cleavages within the polyprotein produce the structural proteins capsid, E2, and E1. The E2 signal peptide remains attached to the C-terminus of the capsid protein after cleavage by the signal peptidase. Another signal peptide at E2 C-terminus directs E1 to the ER, with a similar mechanism. Post-translationally, contains three N-linked oligosaccharides. Capsid is phosphorylated on Ser-46 by host. This phosphorylation negatively regulates capsid protein RNA-binding activity. Dephosphorylated by human PP1A.

Its subcellular location is the virion. The protein resides in the host cytoplasm. It localises to the host mitochondrion. It is found in the virion membrane. The protein localises to the host Golgi apparatus membrane. In terms of biological role, capsid protein interacts with genomic RNA and assembles into icosahedric core particles 65-70 nm in diameter. The resulting nucleocapsid eventually associates with the cytoplasmic domain of E2 at the cell membrane, leading to budding and formation of mature virions from host Golgi membranes. Phosphorylation negatively regulates RNA-binding activity, possibly delaying virion assembly during the viral replication phase. Capsid protein dimerizes and becomes disulfide-linked in the virion. Modulates genomic RNA replication. Modulates subgenomic RNA synthesis by interacting with human C1QBP/SF2P32. Induces both perinuclear clustering of mitochondria and the formation of electron-dense intermitochondrial plaques, both hallmarks of rubella virus infected cells. Induces apoptosis when expressed in transfected cells. Its function is as follows. Responsible for viral attachment to target host cell, by binding to the cell receptor. Its transport to the plasma membrane depends on interaction with E1 protein. The surface glycoproteins display an irregular helical organization and a pseudo-tetrameric inner nucleocapsid arrangement. Class II viral fusion protein. Fusion activity is inactive as long as E1 is bound to E2 in mature virion. After virus attachment to target cell and clathrin-mediated endocytosis, acidification of the endosome would induce dissociation of E1/E2 heterodimer and concomitant trimerization of the E1 subunits. This E1 homotrimer is fusion active, and promotes release of viral nucleocapsid in cytoplasm after endosome and viral membrane fusion. The cytoplasmic tail of spike glycoprotein E1 modulates virus release. The surface glycoproteins display an irregular helical organization and a pseudo-tetrameric inner nucleocapsid arrangement. The chain is Structural polyprotein from Homo sapiens (Human).